Reading from the N-terminus, the 237-residue chain is Sugar fermentation stimulation protein homolog (237 aa).

Belongs to the SfsA family.

In Synechocystis sp. (strain ATCC 27184 / PCC 6803 / Kazusa), this protein is Sugar fermentation stimulation protein homolog.